Consider the following 204-residue polypeptide: Ras-related protein RabL (204 aa).

Residue 14 to 21 (GDSNVGKT) coordinates GTP. Residues 36–44 (RPPSIGPDY) carry the Effector region motif. GTP contacts are provided by residues 62-66 (DTCGQ) and 120-123 (TKSD). 2 S-geranylgeranyl cysteine lipidation sites follow: Cys-203 and Cys-204.

The protein belongs to the small GTPase superfamily. Rab family.

It localises to the cell membrane. The chain is Ras-related protein RabL (rabL) from Dictyostelium discoideum (Social amoeba).